Consider the following 146-residue polypeptide: Snaclec 1 (146 aa).

A signal peptide spans 1–23; the sequence is MGRFIFISFGLLVVFLSLSGTEA. 3 cysteine pairs are disulfide-bonded: cysteine 25-cysteine 36, cysteine 53-cysteine 142, and cysteine 119-cysteine 134. The C-type lectin domain maps to 32-143; that stretch reads YEGHCYRVFD…CRNYGHFVCK (112 aa).

It belongs to the snaclec family. As to quaternary structure, heterodimer; disulfide-linked. As to expression, expressed by the venom gland.

It localises to the secreted. Functionally, interferes with one step of hemostasis (modulation of platelet aggregation, or coagulation cascade, for example). This is Snaclec 1 from Bitis arietans (African puff adder).